A 510-amino-acid chain; its full sequence is Chromosomal replication initiator protein DnaA (510 aa).

A domain I, interacts with DnaA modulators region spans residues Met1–Asp107. The tract at residues Asp107–Thr169 is domain II. Residues Pro119 to Gly168 are disordered. Positions Ser170–Ala386 are domain III, AAA+ region. 4 residues coordinate ATP: Gly214, Gly216, Lys217, and Thr218. A domain IV, binds dsDNA region spans residues Ser387–Arg510.

This sequence belongs to the DnaA family. Oligomerizes as a right-handed, spiral filament on DNA at oriC.

The protein resides in the cytoplasm. Its function is as follows. Plays an essential role in the initiation and regulation of chromosomal replication. ATP-DnaA binds to the origin of replication (oriC) to initiate formation of the DNA replication initiation complex once per cell cycle. Binds the DnaA box (a 9 base pair repeat at the origin) and separates the double-stranded (ds)DNA. Forms a right-handed helical filament on oriC DNA; dsDNA binds to the exterior of the filament while single-stranded (ss)DNA is stabiized in the filament's interior. The ATP-DnaA-oriC complex binds and stabilizes one strand of the AT-rich DNA unwinding element (DUE), permitting loading of DNA polymerase. After initiation quickly degrades to an ADP-DnaA complex that is not apt for DNA replication. Binds acidic phospholipids. The protein is Chromosomal replication initiator protein DnaA of Mycobacterium ulcerans (strain Agy99).